Reading from the N-terminus, the 486-residue chain is Malonate-semialdehyde dehydrogenase 2 (486 aa).

The NAD(+) site is built by phenylalanine 154, lysine 178, glutamate 181, arginine 182, and serine 231. Cysteine 286 serves as the catalytic Nucleophile. Glutamate 385 contributes to the NAD(+) binding site.

Belongs to the aldehyde dehydrogenase family. IolA subfamily. Homotetramer.

It catalyses the reaction 3-oxopropanoate + NAD(+) + CoA + H2O = hydrogencarbonate + acetyl-CoA + NADH + H(+). It carries out the reaction 2-methyl-3-oxopropanoate + NAD(+) + CoA + H2O = propanoyl-CoA + hydrogencarbonate + NADH + H(+). It participates in polyol metabolism; myo-inositol degradation into acetyl-CoA; acetyl-CoA from myo-inositol: step 7/7. Functionally, catalyzes the oxidation of malonate semialdehyde (MSA) and methylmalonate semialdehyde (MMSA) into acetyl-CoA and propanoyl-CoA, respectively. Is involved in a myo-inositol catabolic pathway. Bicarbonate, and not CO2, is the end-product of the enzymatic reaction. This Shouchella clausii (strain KSM-K16) (Alkalihalobacillus clausii) protein is Malonate-semialdehyde dehydrogenase 2.